The chain runs to 353 residues: Tectonin-2 (353 aa).

The Ricin B-type lectin domain occupies 44–93; that stretch reads WIFDNDGYIRLAANHNLVLDVNGGAAKEGNTVLSYPDKKDHAKNQLWVNK. A run of 6 repeats spans residues 138–173, 174–210, 211–247, 248–282, 283–318, and 319–353. The interval 138–353 is 6 X approximate tandem repeats; sequence SAWERHEGEL…SAHNIYKALL (216 aa).

The protein belongs to the tectonin family.

It localises to the cell surface. It is found in the cytoplasmic vesicle membrane. Probably involved in bacterial recognition. May be a lectin that function as part of a transmembrane signaling complex during phagocytosis. This chain is Tectonin-2 (TECB), found in Physarum polycephalum (Slime mold).